The sequence spans 166 residues: Twist-related protein (166 aa).

Over residues 1-18 the composition is skewed to low complexity; that stretch reads MMQEESSSPVSPVDSLSN. The interval 1–83 is disordered; it reads MMQEESSSPV…RVMANVRERQ (83 aa). Basic residues predominate over residues 28–39; sequence SKRGCRKRRSAR. Residues 57–75 show a composition bias toward polar residues; it reads ASSTGSSPQSFEELQSQRV. Residues 72 to 123 form the bHLH domain; it reads SQRVMANVRERQRTQSLNEAFSSLRKIIPTLPSDKLSKIQTLKLASRYIDFL.

In terms of assembly, efficient DNA binding requires dimerization with another bHLH protein. Homodimer. Subset of mesodermal cells.

The protein resides in the nucleus. Its function is as follows. Probable transcription factor, which may be involved, with other proteins, in establishing the pattern of cell type-specific gene expression in mesodermal cell subgroups. In Xenopus laevis (African clawed frog), this protein is Twist-related protein (twist1).